Consider the following 228-residue polypeptide: ATP phosphoribosyltransferase (228 aa).

The protein belongs to the ATP phosphoribosyltransferase family. Short subfamily. Heteromultimer composed of HisG and HisZ subunits.

The protein localises to the cytoplasm. It carries out the reaction 1-(5-phospho-beta-D-ribosyl)-ATP + diphosphate = 5-phospho-alpha-D-ribose 1-diphosphate + ATP. It functions in the pathway amino-acid biosynthesis; L-histidine biosynthesis; L-histidine from 5-phospho-alpha-D-ribose 1-diphosphate: step 1/9. In terms of biological role, catalyzes the condensation of ATP and 5-phosphoribose 1-diphosphate to form N'-(5'-phosphoribosyl)-ATP (PR-ATP). Has a crucial role in the pathway because the rate of histidine biosynthesis seems to be controlled primarily by regulation of HisG enzymatic activity. In Acinetobacter baylyi (strain ATCC 33305 / BD413 / ADP1), this protein is ATP phosphoribosyltransferase.